Reading from the N-terminus, the 913-residue chain is Alanine--tRNA ligase (913 aa).

Zn(2+)-binding residues include His600, His604, Cys703, and His707.

Belongs to the class-II aminoacyl-tRNA synthetase family. Zn(2+) is required as a cofactor.

It is found in the cytoplasm. The enzyme catalyses tRNA(Ala) + L-alanine + ATP = L-alanyl-tRNA(Ala) + AMP + diphosphate. Its function is as follows. Catalyzes the attachment of alanine to tRNA(Ala) in a two-step reaction: alanine is first activated by ATP to form Ala-AMP and then transferred to the acceptor end of tRNA(Ala). Also edits incorrectly charged Ser-tRNA(Ala) and Gly-tRNA(Ala) via its editing domain. This chain is Alanine--tRNA ligase, found in Methanothrix thermoacetophila (strain DSM 6194 / JCM 14653 / NBRC 101360 / PT) (Methanosaeta thermophila).